Consider the following 190-residue polypeptide: MKYAIVYSSRTGNTRQLAEKAFEVLGEREGGECVYFGEVPAGPLEGATAQRFREAEILYAGFWTDKGNADSGILSLFKELGKTDNMPPEIILFGTAGFGADQAYYDRIIQAAACELPESVKLKASFMCQGKMQQGVLERYRSMLEANPQDGRAKLMVDNYHAALTHPDGTDMAAFQHFLISSVPAAGMGE.

It participates in porphyrin-containing compound metabolism; protoheme degradation. Together with BilR, catalyzes reduction of mesobilirubin and/or bilirubin to urobilinogen, a key step during heme degradation. BilS is probably involved in electron transfer for the bilirubin reductase BilR. This is Flavodoxin-like domain-containing protein BilS from Clostridium symbiosum (strain WAL-14163).